A 100-amino-acid chain; its full sequence is Small ribosomal subunit protein uS14c (100 aa).

This sequence belongs to the universal ribosomal protein uS14 family. As to quaternary structure, part of the 30S ribosomal subunit.

It localises to the plastid. It is found in the chloroplast. Its function is as follows. Binds 16S rRNA, required for the assembly of 30S particles. This chain is Small ribosomal subunit protein uS14c, found in Huperzia lucidula (Shining clubmoss).